Consider the following 287-residue polypeptide: Iron-sulfur cluster carrier protein (287 aa).

47 to 54 (GKGGVGKS) serves as a coordination point for ATP.

It belongs to the Mrp/NBP35 ATP-binding proteins family. As to quaternary structure, homodimer.

In terms of biological role, binds and transfers iron-sulfur (Fe-S) clusters to target apoproteins. Can hydrolyze ATP. The protein is Iron-sulfur cluster carrier protein of Pseudomonas fragi.